A 575-amino-acid chain; its full sequence is Beta-amylase 1, chloroplastic (575 aa).

The N-terminal 41 residues, 1 to 41, are a transit peptide targeting the chloroplast; the sequence is MALNLSHQLGVLAGTPIKSGEMTDSSLLSISPPSARMMTPK. Residues serine 55 and serine 59 each carry the phosphoserine modification. Cysteine 73 and cysteine 511 are joined by a disulfide. Aspartate 147, histidine 187, and aspartate 195 together coordinate substrate. Catalysis depends on glutamate 279, which acts as the Proton donor. The substrate site is built by lysine 392, histidine 397, and threonine 439. Glutamate 477 acts as the Proton acceptor in catalysis. Substrate is bound by residues 478 to 479 and arginine 517; that span reads NA.

It belongs to the glycosyl hydrolase 14 family. Expressed in leaves, roots, flowers, pollen, and seeds.

Its subcellular location is the plastid. It is found in the chloroplast. The enzyme catalyses Hydrolysis of (1-&gt;4)-alpha-D-glucosidic linkages in polysaccharides so as to remove successive maltose units from the non-reducing ends of the chains.. Redox regulation; active in reducing conditions, inactive in oxidizing conditions. Thioredoxins f1, m1, and y1 mediate the reversible reductive activation of oxidized BAM1. Its function is as follows. Beta-amylase activity. Can use p-nitrophenyl maltopentaoside (PNPG5) as substrate only in reduced form. Can play a minor role in the starch degradation and maltose metabolism in chloroplasts during the night. More active on phosphorylated glucan. Interacts directly with starch or other alpha-1,4-glucan. This chain is Beta-amylase 1, chloroplastic (BAM1), found in Arabidopsis thaliana (Mouse-ear cress).